We begin with the raw amino-acid sequence, 204 residues long: Small ribosomal subunit protein uS4c (204 aa).

The region spanning Met90–Ile150 is the S4 RNA-binding domain.

The protein belongs to the universal ribosomal protein uS4 family. In terms of assembly, part of the 30S ribosomal subunit. Contacts protein S5. The interaction surface between S4 and S5 is involved in control of translational fidelity.

The protein resides in the plastid. It is found in the chloroplast. In terms of biological role, one of the primary rRNA binding proteins, it binds directly to 16S rRNA where it nucleates assembly of the body of the 30S subunit. Functionally, with S5 and S12 plays an important role in translational accuracy. The chain is Small ribosomal subunit protein uS4c (rps4) from Gnetum parvifolium (Small-leaved jointfir).